The primary structure comprises 1644 residues: Terminal uridylyltransferase 4 (1644 aa).

Disordered regions lie at residues 30–60 (SNQT…KQND) and 75–277 (AASV…EMDY). The residue at position 102 (Ser-102) is a Phosphoserine. A compositionally biased stretch (polar residues) spans 108–123 (KGSSQTKLEKTPSLQT). Ser-131 carries the phosphoserine modification. Polar residues-rich tracts occupy residues 146–156 (AEATTEKALNS) and 163–174 (TPTSQMKLQKTP). Ser-176 bears the Phosphoserine mark. Composition is skewed to polar residues over residues 194-209 (QTES…SSFV) and 226-242 (LENS…TDNI). The segment covering 258-272 (DLSKMKSEESNKENS) has biased composition (basic and acidic residues). A required for interaction with LIN28A and pre-let-7 RNA region spans residues 273–353 (SEMDYLENAT…KEKRHKKNIL (81 aa)). Cys-326, Cys-329, His-342, and His-348 together coordinate Zn(2+). A compositionally biased stretch (basic and acidic residues) spans 603–623 (IADENKAKADEPKDDTKKTET). The interval 603–640 (IADENKAKADEPKDDTKKTETDNQSNAAKAKHGKSPLT) is disordered. The 50-residue stretch at 649–698 (LGQLWLELLKFYTLDFALEEYVICVRIQDILTRENKNWPKRRIAIEDPFS) folds into the PAP-associated 1 domain. Disordered regions lie at residues 733 to 759 (KGGN…VKSD) and 812 to 841 (HGQD…DLTP). The span at 745–755 (KEKGKLSSKKP) shows a compositional bias: basic residues. The span at 815 to 827 (DSSSLSTASGGSD) shows a compositional bias: low complexity. Residues 828-837 (LKQKSAEKQG) show a composition bias toward basic and acidic residues. The interval 918–1634 (DKFILTSGKP…CATRRCRERC (717 aa)) is sufficient for monouridylation activity. The CCHC-type 1 zinc-finger motif lies at 930-947 (IVCSICKKDGHSKNDCPE). UTP is bound by residues 1015–1018 (SSKN), 1025–1028 (SDLD), Asn-1098, Lys-1120, 1138–1142 (SYAYI), and His-1254. Asp-1026 and Asp-1028 together coordinate Mg(2+). The 54-residue stretch at 1201-1254 (SLGELWLGLLRFYTEEFDFKEYVISIRQKKLLTTFEKQWTSKCIAIEDPFDLNH) folds into the PAP-associated 2 domain. Residues 1310 to 1327 (RCCRVCGKIGHYMKDCPK) form a CCHC-type 2 zinc finger. Residues 1329 to 1350 (KRLKKKDSEEEKEGNEEEKDSR) are disordered. A CCHC-type 3 zinc finger spans residues 1358-1375 (LRCFICGDAGHVRRECPE). Residues 1402–1427 (AGSAQQQSDQSIRTRQSSECSDSPSY) are compositionally biased toward low complexity. Residues 1402 to 1483 (AGSAQQQSDQ…LYNFPQSPPA (82 aa)) form a disordered region. Over residues 1428-1450 (SPQPQPFPQNSPQPSALPPPPSQ) the composition is skewed to pro residues. Positions 1451-1473 (PGSQPKLGPPQQGGQPPHQVQMP) are enriched in low complexity. Position 1624 is an omega-N-methylarginine (Arg-1624).

Belongs to the DNA polymerase type-B-like family. As to quaternary structure, interacts with LIN28A in the presence of pre-let-7 RNA. Interacts with T2BP. Interacts with MOV10; the interaction is RNA-dependent. Mg(2+) is required as a cofactor. Requires Mn(2+) as cofactor. In terms of tissue distribution, ubiquitously expressed.

It localises to the nucleus. The protein localises to the cytoplasm. The protein resides in the cytoplasmic ribonucleoprotein granule. It carries out the reaction RNA(n) + UTP = RNA(n)-3'-uridine ribonucleotide + diphosphate. Functionally, uridylyltransferase that mediates the terminal uridylation of mRNAs with short (less than 25 nucleotides) poly(A) tails, hence facilitating global mRNA decay. Essential for both oocyte maturation and fertility. Through 3' terminal uridylation of mRNA, sculpts, with TUT7, the maternal transcriptome by eliminating transcripts during oocyte growth. Involved in microRNA (miRNA)-induced gene silencing through uridylation of deadenylated miRNA targets. Also functions as an integral regulator of microRNA biogenesiS using 3 different uridylation mechanisms. Acts as a suppressor of miRNA biogenesis by mediating the terminal uridylation of some miRNA precursors, including that of let-7 (pre-let-7), miR107, miR-143 and miR-200c. Uridylated miRNAs are not processed by Dicer and undergo degradation. Degradation of pre-let-7 contributes to the maintenance of embryonic stem (ES) cell pluripotency. Also catalyzes the 3' uridylation of miR-26A, a miRNA that targets IL6 transcript. This abrogates the silencing of IL6 transcript, hence promoting cytokine expression. In the absence of LIN28A, TUT7 and TUT4 monouridylate group II pre-miRNAs, which includes most of pre-let7 members, that shapes an optimal 3' end overhang for efficient processing. Add oligo-U tails to truncated pre-miRNAS with a 5' overhang which may promote rapid degradation of non-functional pre-miRNA species. May also suppress Toll-like receptor-induced NF-kappa-B activation via binding to T2BP. Does not play a role in replication-dependent histone mRNA degradation. Due to functional redundancy between TUT4 and TUT7, the identification of the specific role of each of these proteins is difficult. TUT4 and TUT7 restrict retrotransposition of long interspersed element-1 (LINE-1) in cooperation with MOV10 counteracting the RNA chaperonne activity of L1RE1. TUT7 uridylates LINE-1 mRNAs in the cytoplasm which inhibits initiation of reverse transcription once in the nucleus, whereas uridylation by TUT4 destabilizes mRNAs in cytoplasmic ribonucleoprotein granules. This is Terminal uridylyltransferase 4 from Mus musculus (Mouse).